Reading from the N-terminus, the 198-residue chain is Photosystem I assembly protein Ycf4 (198 aa).

The next 2 membrane-spanning stretches (helical) occupy residues Trp35–Ile57 and Ile70–Asn92.

The protein belongs to the Ycf4 family.

The protein localises to the plastid. It is found in the chloroplast thylakoid membrane. In terms of biological role, seems to be required for the assembly of the photosystem I complex. The polypeptide is Photosystem I assembly protein Ycf4 (Euglena gracilis).